The primary structure comprises 173 residues: MIIFKDMITGDEMFTDSSKYKVVDDCILEVECRHVTRRMGDIQLEGANPSQEEADEGTDEVTESGLDLVLNQRLVETGFSKSDYKNYLKTYTKALQDKWKEVGMSDSQMAEAKTKFTEAVKKVLPKVGDLQFFMGESSNPDGLVALLEYRENSDGTETPVMMFFKHGLEEEKV.

The TCTP domain maps to Met-1–Val-173.

This sequence belongs to the TCTP family. In terms of tissue distribution, expressed by the venom gland.

Its subcellular location is the secreted. Its function is as follows. Venom protein that causes edema, enhances vascular permeability and is likely related to the inflammatory activity of the venom. The sequence is that of Translationally-controlled tumor protein homolog from Grammostola rosea (Chilean rose tarantula).